The sequence spans 124 residues: Small ribosomal subunit protein uS12 (124 aa).

The tract at residues Met-1–Gly-32 is disordered. Residue Asp-89 is modified to 3-methylthioaspartic acid.

The protein belongs to the universal ribosomal protein uS12 family. Part of the 30S ribosomal subunit. Contacts proteins S8 and S17. May interact with IF1 in the 30S initiation complex.

In terms of biological role, with S4 and S5 plays an important role in translational accuracy. Interacts with and stabilizes bases of the 16S rRNA that are involved in tRNA selection in the A site and with the mRNA backbone. Located at the interface of the 30S and 50S subunits, it traverses the body of the 30S subunit contacting proteins on the other side and probably holding the rRNA structure together. The combined cluster of proteins S8, S12 and S17 appears to hold together the shoulder and platform of the 30S subunit. This is Small ribosomal subunit protein uS12 from Nocardioides sp. (strain ATCC BAA-499 / JS614).